The chain runs to 611 residues: Elongation factor 4 (611 aa).

The 183-residue stretch at 11 to 193 (KHIRNFSIVA…KIVKDVPAPT (183 aa)) folds into the tr-type G domain. GTP-binding positions include 23–28 (DHGKST) and 140–143 (NKID).

Belongs to the TRAFAC class translation factor GTPase superfamily. Classic translation factor GTPase family. LepA subfamily.

It is found in the cell membrane. It catalyses the reaction GTP + H2O = GDP + phosphate + H(+). In terms of biological role, required for accurate and efficient protein synthesis under certain stress conditions. May act as a fidelity factor of the translation reaction, by catalyzing a one-codon backward translocation of tRNAs on improperly translocated ribosomes. Back-translocation proceeds from a post-translocation (POST) complex to a pre-translocation (PRE) complex, thus giving elongation factor G a second chance to translocate the tRNAs correctly. Binds to ribosomes in a GTP-dependent manner. This chain is Elongation factor 4, found in Limosilactobacillus reuteri (strain DSM 20016) (Lactobacillus reuteri).